The sequence spans 147 residues: Large ribosomal subunit protein uL15 (147 aa).

The span at 1 to 20 (MTLRLNDLKPADGARTERTR) shows a compositional bias: basic and acidic residues. The tract at residues 1–61 (MTLRLNDLKP…GFEGGQTPMQ (61 aa)) is disordered. Gly residues predominate over residues 23 to 33 (RGIGSGLGKTA). Basic residues predominate over residues 34-47 (GRGHKGSFARKGGG).

It belongs to the universal ribosomal protein uL15 family. In terms of assembly, part of the 50S ribosomal subunit.

In terms of biological role, binds to the 23S rRNA. This is Large ribosomal subunit protein uL15 from Xanthomonas euvesicatoria pv. vesicatoria (strain 85-10) (Xanthomonas campestris pv. vesicatoria).